The chain runs to 161 residues: Phage-like element PBSX protein XkdI (161 aa).

To B.subtilis YqbI.

The protein is Phage-like element PBSX protein XkdI (xkdI) of Bacillus subtilis (strain 168).